A 110-amino-acid chain; its full sequence is Large ribosomal subunit protein P1 (110 aa).

Ala-2 carries the post-translational modification Blocked amino end (Ala). A compositionally biased stretch (low complexity) spans Ala-69–Pro-83. The tract at residues Ala-69–Asp-110 is disordered. A compositionally biased stretch (basic and acidic residues) spans Ala-84–Glu-96. At Ser-97 the chain carries Phosphoserine; in form eL12'-P.

As to quaternary structure, part of the ribosomal stalk of the large ribosomal subunit; P1 and P2 exist as dimers which assemble on the P0 scaffold. Post-translationally, phosphorylation of Ser-97 converts eL12' to eL12'-P.

Functionally, plays an important role in the elongation step of protein synthesis. This chain is Large ribosomal subunit protein P1, found in Artemia salina (Brine shrimp).